We begin with the raw amino-acid sequence, 510 residues long: Ribonuclease Y (510 aa).

Residues 2–22 (IYIIFSSIFAGFILGFLVRVF) traverse the membrane as a helical segment. The KH domain occupies 198-258 (TVASVELPND…IRKELAKRTL (61 aa)). Residues 324 to 419 (VLSHSKETAI…VQIADAISAS (96 aa)) form the HD domain.

It belongs to the RNase Y family.

Its subcellular location is the cell membrane. In terms of biological role, endoribonuclease that initiates mRNA decay. In Borreliella burgdorferi (strain ATCC 35210 / DSM 4680 / CIP 102532 / B31) (Borrelia burgdorferi), this protein is Ribonuclease Y.